Consider the following 130-residue polypeptide: Histone H2A type 1-F (130 aa).

Residues M1–A22 are disordered. Residue S2 is modified to Phosphoserine; by RPS6KA5. R4 carries the citrulline; alternate modification. R4 is subject to Symmetric dimethylarginine; by PRMT5; alternate. Residues K6 and K10 each carry the N6-(2-hydroxyisobutyryl)lysine modification. Positions Q7–S19 are enriched in basic residues. Position 10 is an N6-lactoyllysine; alternate (K10). The residue at position 37 (K37) is an N6-(2-hydroxyisobutyryl)lysine; alternate. An N6-(beta-hydroxybutyryl)lysine; alternate modification is found at K37. K37 is modified (N6-crotonyllysine; alternate). An N6-(2-hydroxyisobutyryl)lysine mark is found at K75, K76, and K96. K96 carries the N6-glutaryllysine; alternate modification. Q105 is modified (N5-methylglutamine). Residue K119 is modified to N6-(2-hydroxyisobutyryl)lysine; alternate. N6-crotonyllysine; alternate is present on residues K119 and K120. N6-glutaryllysine; alternate is present on residues K119 and K120. A Glycyl lysine isopeptide (Lys-Gly) (interchain with G-Cter in ubiquitin); alternate cross-link involves residue K120. The residue at position 121 (T121) is a Phosphothreonine; by DCAF1. K126 carries the post-translational modification N6-crotonyllysine; alternate. K126 bears the N6-glutaryllysine; alternate mark.

The protein belongs to the histone H2A family. The nucleosome is a histone octamer containing two molecules each of H2A, H2B, H3 and H4 assembled in one H3-H4 heterotetramer and two H2A-H2B heterodimers. The octamer wraps approximately 147 bp of DNA. In terms of processing, deiminated on Arg-4 in granulocytes upon calcium entry. Post-translationally, monoubiquitination of Lys-120 (H2AK119Ub) by RING1, TRIM37 and RNF2/RING2 complex gives a specific tag for epigenetic transcriptional repression and participates in X chromosome inactivation of female mammals. It is involved in the initiation of both imprinted and random X inactivation. Ubiquitinated H2A is enriched in inactive X chromosome chromatin. Ubiquitination of H2A functions downstream of methylation of 'Lys-27' of histone H3 (H3K27me). H2AK119Ub by RNF2/RING2 can also be induced by ultraviolet and may be involved in DNA repair. Following DNA double-strand breaks (DSBs), it is ubiquitinated through 'Lys-63' linkage of ubiquitin moieties by the E2 ligase UBE2N and the E3 ligases RNF8 and RNF168, leading to the recruitment of repair proteins to sites of DNA damage. Ubiquitination at Lys-14 and Lys-16 (H2AK13Ub and H2AK15Ub, respectively) in response to DNA damage is initiated by RNF168 that mediates monoubiquitination at these 2 sites, and 'Lys-63'-linked ubiquitin are then conjugated to monoubiquitin; RNF8 is able to extend 'Lys-63'-linked ubiquitin chains in vitro. H2AK119Ub and ionizing radiation-induced 'Lys-63'-linked ubiquitination (H2AK13Ub and H2AK15Ub) are distinct events. Phosphorylation on Ser-2 (H2AS1ph) is enhanced during mitosis. Phosphorylation on Ser-2 by RPS6KA5/MSK1 directly represses transcription. Acetylation of H3 inhibits Ser-2 phosphorylation by RPS6KA5/MSK1. Phosphorylation at Thr-121 (H2AT120ph) by DCAF1 is present in the regulatory region of many tumor suppresor genes and down-regulates their transcription. In terms of processing, symmetric dimethylation on Arg-4 by the PRDM1/PRMT5 complex may play a crucial role in the germ-cell lineage. Post-translationally, glutamine methylation at Gln-105 (H2AQ104me) by FBL is specifically dedicated to polymerase I. It is present at 35S ribosomal DNA locus and impairs binding of the FACT complex. Crotonylation (Kcr) is specifically present in male germ cells and marks testis-specific genes in post-meiotic cells, including X-linked genes that escape sex chromosome inactivation in haploid cells. Crotonylation marks active promoters and enhancers and confers resistance to transcriptional repressors. It is also associated with post-meiotically activated genes on autosomes. In terms of processing, lactylated in macrophages by EP300/P300 by using lactoyl-CoA directly derived from endogenous or exogenous lactate, leading to stimulates gene transcription.

It is found in the nucleus. It localises to the chromosome. In terms of biological role, core component of nucleosome. Nucleosomes wrap and compact DNA into chromatin, limiting DNA accessibility to the cellular machineries which require DNA as a template. Histones thereby play a central role in transcription regulation, DNA repair, DNA replication and chromosomal stability. DNA accessibility is regulated via a complex set of post-translational modifications of histones, also called histone code, and nucleosome remodeling. This Rattus norvegicus (Rat) protein is Histone H2A type 1-F.